The chain runs to 175 residues: Archaemetzincin (175 aa).

His125 lines the Zn(2+) pocket. Glu126 functions as the Proton acceptor in the catalytic mechanism. The Zn(2+) site is built by His129, His135, Cys136, Cys141, Cys160, and Cys163.

The protein belongs to the peptidase M54 family. As to quaternary structure, monomer. It depends on Zn(2+) as a cofactor.

In terms of biological role, probable zinc metalloprotease whose natural substrate is unknown. Does not show endo- or exopeptidase activity against resorufin labeled casein, p-nitroanilide (pNA), amidomethylcoumarin (AMC) (one to three amino acids in length), and hippuryl-aminoacid substrates. The sequence is that of Archaemetzincin from Methanopyrus kandleri (strain AV19 / DSM 6324 / JCM 9639 / NBRC 100938).